A 283-amino-acid chain; its full sequence is ATP phosphoribosyltransferase (283 aa).

This sequence belongs to the ATP phosphoribosyltransferase family. Long subfamily. As to quaternary structure, equilibrium between an active dimeric form, an inactive hexameric form and higher aggregates. Interconversion between the various forms is largely reversible and is influenced by the natural substrates and inhibitors of the enzyme. It depends on Mg(2+) as a cofactor.

Its subcellular location is the cytoplasm. The enzyme catalyses 1-(5-phospho-beta-D-ribosyl)-ATP + diphosphate = 5-phospho-alpha-D-ribose 1-diphosphate + ATP. Its pathway is amino-acid biosynthesis; L-histidine biosynthesis; L-histidine from 5-phospho-alpha-D-ribose 1-diphosphate: step 1/9. Feedback inhibited by histidine. Functionally, catalyzes the condensation of ATP and 5-phosphoribose 1-diphosphate to form N'-(5'-phosphoribosyl)-ATP (PR-ATP). Has a crucial role in the pathway because the rate of histidine biosynthesis seems to be controlled primarily by regulation of HisG enzymatic activity. The polypeptide is ATP phosphoribosyltransferase (Mycobacterium sp. (strain JLS)).